The primary structure comprises 560 residues: Choline/ethanolamine transporter FLVCR1 (560 aa).

The disordered stretch occupies residues 1 to 22 (MVKLNDEEGAAMAPGHQPTNGY). Over 1 to 99 (MVKLNDEEGA…TPGTEGSPAP (99 aa)) the chain is Cytoplasmic. Ser-56 bears the Phosphoserine mark. Positions 68–99 (QTPLAPEEETQTRLLPTGPGEETPGTEGSPAP) are disordered. Low complexity predominate over residues 83–95 (PTGPGEETPGTEG). Residues 100–124 (QTALSARRFVVLLIFSLYSLVNAFQ) form a helical membrane-spanning segment. The Extracellular portion of the chain corresponds to 125-142 (WIQYSVISNVFEGFYGVS). A helical transmembrane segment spans residues 143–170 (SLHIDWLSMVYMLAYVPLIFPATWLLDT). Over 171–172 (RG) the chain is Cytoplasmic. A helical transmembrane segment spans residues 173–192 (LRLTALLGSGLNCLGAWVKC). Residues 193-199 (ASVQQHL) are Extracellular-facing. Residues 200–228 (FWVTMLGQCLCSVAQVFILGLPSRIASVW) form a helical membrane-spanning segment. Gln-214 lines the ethanolamine pocket. At 229 to 233 (FGPKE) the chain is on the cytoplasmic side. Residues 234 to 259 (VSTACATAVLGNQLGAAIGFLLPPVL) form a helical membrane-spanning segment. At 260–265 (VPNTQN) the chain is on the extracellular side. Asn-265 carries N-linked (GlcNAc...) asparagine glycosylation. A helical membrane pass occupies residues 266–295 (NTDLLACNISTMFYGTSSVATFLCFLTIIA). Residues 296–331 (FKEKPQYPPSQAQAALQNSPPAKYSYKKSIRNLFRN) lie on the Cytoplasmic side of the membrane. A helical membrane pass occupies residues 332-362 (VPFVLLLITYGIITGAFYSVSTLLNQMILTY). Topologically, residues 363–366 (YKGE) are extracellular. Residues 367-395 (EVSAGKIGLTLVVAGMVGSILCGFWLDYT) form a helical membrane-spanning segment. At 396–397 (KI) the chain is on the cytoplasmic side. Residues 398–420 (YKQTTLIVYILSFLGMVIFTFTL) traverse the membrane as a helical segment. Topologically, residues 421-423 (DLG) are extracellular. A helical transmembrane segment spans residues 424 to 453 (YGIVVFVTGGVLGFFMTGYLPLGFEFAVEI). Residues 454–461 (TYPESEGT) are Cytoplasmic-facing. The helical transmembrane segment at 462-487 (SSGLLNAAAQIFGILFTLAQGKLTTD) threads the bilayer. Gln-471 provides a ligand contact to ethanolamine. Gln-471 contributes to the choline binding site. The Extracellular segment spans residues 488–489 (YS). Residues 490-512 (PKAGNIFLCVWLFLGIILTALIK) traverse the membrane as a helical segment. Residues 513 to 560 (SDLRRHNINIGIANGDIKAVPVEDTVEDSPTDKESKTIVMSKQSESAI) are Cytoplasmic-facing. The segment at 537–560 (TVEDSPTDKESKTIVMSKQSESAI) is disordered. Ser-541 carries the post-translational modification Phosphoserine. Over residues 550–560 (IVMSKQSESAI) the composition is skewed to polar residues.

It belongs to the major facilitator superfamily. Feline leukemia virus subgroup C receptor (TC 2.A.1.28.1) family.

Its subcellular location is the cell membrane. The catalysed reaction is choline(out) = choline(in). It carries out the reaction ethanolamine(in) = ethanolamine(out). The enzyme catalyses heme b(in) = heme b(out). In terms of biological role, uniporter that mediates the transport of extracellular choline and ethanolamine into cells, thereby playing a key role in phospholipid biosynthesis. Choline and ethanolamine are the precursors of phosphatidylcholine and phosphatidylethanolamine, respectively, the two most abundant phospholipids. Transport is not coupled with proton transport and is exclusively driven by the choline (or ethanolamine) gradient across the plasma membrane. Also acts as a heme b transporter that mediates heme efflux from the cytoplasm to the extracellular compartment. (Microbial infection) Confers susceptibility to Feline leukemia virus subgroup C (FeLV-C) infection, which is associated with fatal erythroid aplasia, also known as aplastic anemia. This chain is Choline/ethanolamine transporter FLVCR1 (FLVCR1), found in Felis catus (Cat).